Reading from the N-terminus, the 423-residue chain is Imidazolonepropionase (423 aa).

2 residues coordinate Fe(3+): H78 and H80. H78 and H80 together coordinate Zn(2+). Residues R87, Y150, and H183 each contribute to the 4-imidazolone-5-propanoate site. Position 150 (Y150) interacts with N-formimidoyl-L-glutamate. H247 serves as a coordination point for Fe(3+). H247 provides a ligand contact to Zn(2+). Position 250 (E250) interacts with 4-imidazolone-5-propanoate. D322 is a binding site for Fe(3+). D322 contacts Zn(2+). N-formimidoyl-L-glutamate contacts are provided by N324 and G326. S327 is a 4-imidazolone-5-propanoate binding site.

Belongs to the metallo-dependent hydrolases superfamily. HutI family. Zn(2+) is required as a cofactor. Fe(3+) serves as cofactor.

The protein localises to the cytoplasm. The catalysed reaction is 4-imidazolone-5-propanoate + H2O = N-formimidoyl-L-glutamate. Its pathway is amino-acid degradation; L-histidine degradation into L-glutamate; N-formimidoyl-L-glutamate from L-histidine: step 3/3. Its function is as follows. Catalyzes the hydrolytic cleavage of the carbon-nitrogen bond in imidazolone-5-propanoate to yield N-formimidoyl-L-glutamate. It is the third step in the universal histidine degradation pathway. The sequence is that of Imidazolonepropionase from Bacillus cytotoxicus (strain DSM 22905 / CIP 110041 / 391-98 / NVH 391-98).